A 211-amino-acid chain; its full sequence is Probable GTP-binding protein EngB (211 aa).

An EngB-type G domain is found at 30-204 (EGFEVAFAGR…YTVLADWMEL (175 aa)). Residues 38 to 45 (GRSNAGKS), 64 to 68 (GRTQL), 82 to 85 (DLPG), 149 to 152 (TKAD), and 182 to 185 (LFSA) contribute to the GTP site. The Mg(2+) site is built by Ser-45 and Thr-66.

Belongs to the TRAFAC class TrmE-Era-EngA-EngB-Septin-like GTPase superfamily. EngB GTPase family. Mg(2+) is required as a cofactor.

Its function is as follows. Necessary for normal cell division and for the maintenance of normal septation. This Pseudomonas savastanoi pv. phaseolicola (strain 1448A / Race 6) (Pseudomonas syringae pv. phaseolicola (strain 1448A / Race 6)) protein is Probable GTP-binding protein EngB.